A 202-amino-acid chain; its full sequence is MNAQVLNLVAALGVMQYSKKLDFTDPQIVYYARAAYVISNTIIFGVYAIIQARINANNDETPLVYEEPAPPFSGQSNGKLVTTTVKEYDSEQLQKAKRSTMMGVAIMAFMHLYMGYAQPLVIQSILPLISLFTNNLVSIYIFNKAAEGSLSRPFAPPAGLFGGGNKPAAAVTGTSSNSNNASAKSDGPTITELNENETEKSS.

3 consecutive transmembrane segments (helical) span residues 34 to 54 (AAYV…QARI), 102 to 122 (MGVA…PLVI), and 125 to 145 (ILPL…FNKA). A disordered region spans residues 165-202 (NKPAAAVTGTSSNSNNASAKSDGPTITELNENETEKSS). The span at 168–185 (AAAVTGTSSNSNNASAKS) shows a compositional bias: low complexity. Residues serine 185 and serine 201 each carry the phosphoserine modification.

It belongs to the PHO88 family.

It is found in the endoplasmic reticulum membrane. This is an uncharacterized protein from Schizosaccharomyces pombe (strain 972 / ATCC 24843) (Fission yeast).